The following is a 283-amino-acid chain: MVLMIVSGRSGSGKSVALRALEDMGFYCVDNLPVVLLPQLASTLADRNISAAVSIDVRNMPESPEVFEHAMTQLPDSFSPQLLFLDADRNTLIRRYSDTRRLHPLSTKNLSLESAIDEESDLLEPLRSRADLIIDTSEMSVHELAEMLRTRLLGKRERELTMVFESFGFKHGIPIDADYVFDVRFLPNPHWDPKLRPMTGLDKPVISFLDRHTEVHNFIYQTRSYLELWLPMLETNNRSYLTVAIGCTGGKHRSVYVAEQLADYFRARGKNVQSRHRTLEKRK.

ATP is bound at residue 8–15 (GRSGSGKS). 56 to 59 (DVRN) provides a ligand contact to GTP. The segment at 266–283 (RARGKNVQSRHRTLEKRK) is RNA-binding.

This sequence belongs to the RapZ-like family. RapZ subfamily. Homotrimer.

Its function is as follows. Modulates the synthesis of GlmS, by affecting the processing and stability of the regulatory small RNA GlmZ. When glucosamine-6-phosphate (GlcN6P) concentrations are high in the cell, RapZ binds GlmZ and targets it to cleavage by RNase E. Consequently, GlmZ is inactivated and unable to activate GlmS synthesis. Under low GlcN6P concentrations, RapZ is sequestered and inactivated by an other regulatory small RNA, GlmY, preventing GlmZ degradation and leading to synthesis of GlmS. The polypeptide is RNase adapter protein RapZ (Yersinia enterocolitica serotype O:8 / biotype 1B (strain NCTC 13174 / 8081)).